The sequence spans 362 residues: Chorismate synthase (362 aa).

NADP(+) is bound at residue R46. FMN contacts are provided by residues 122-124 (RSS), 238-239 (NA), G278, 293-297 (KPTPS), and R319.

This sequence belongs to the chorismate synthase family. As to quaternary structure, homotetramer. FMNH2 is required as a cofactor.

The catalysed reaction is 5-O-(1-carboxyvinyl)-3-phosphoshikimate = chorismate + phosphate. It functions in the pathway metabolic intermediate biosynthesis; chorismate biosynthesis; chorismate from D-erythrose 4-phosphate and phosphoenolpyruvate: step 7/7. Catalyzes the anti-1,4-elimination of the C-3 phosphate and the C-6 proR hydrogen from 5-enolpyruvylshikimate-3-phosphate (EPSP) to yield chorismate, which is the branch point compound that serves as the starting substrate for the three terminal pathways of aromatic amino acid biosynthesis. This reaction introduces a second double bond into the aromatic ring system. This Campylobacter jejuni (strain RM1221) protein is Chorismate synthase.